Here is a 223-residue protein sequence, read N- to C-terminus: DNA mismatch repair protein MutH (223 aa).

Belongs to the MutH family.

The protein localises to the cytoplasm. Functionally, sequence-specific endonuclease that cleaves unmethylated GATC sequences. It is involved in DNA mismatch repair. The chain is DNA mismatch repair protein MutH from Shewanella sp. (strain MR-7).